We begin with the raw amino-acid sequence, 103 residues long: MSQENLKIKGGLSEARPATPEIQMIADKVRPLLEEQTNEKYEKFEAVEYKSQVVAGQNLFIKIDVGNGCFLHMKVFRGLSGEDDLKLKGYQTNKTKTDELTSM.

Positions 52–56 (QVVAG) match the Secondary area of contact motif.

The protein belongs to the cystatin family.

It localises to the cytoplasm. In terms of biological role, this is an intracellular thiol proteinase inhibitor. In Mus musculus (Mouse), this protein is Stefin-3 (Stfa3).